The following is a 132-amino-acid chain: Large ribosomal subunit protein bL12 (132 aa).

This sequence belongs to the bacterial ribosomal protein bL12 family. As to quaternary structure, homodimer. Part of the ribosomal stalk of the 50S ribosomal subunit. Forms a multimeric L10(L12)X complex, where L10 forms an elongated spine to which 2 to 4 L12 dimers bind in a sequential fashion. Binds GTP-bound translation factors.

Forms part of the ribosomal stalk which helps the ribosome interact with GTP-bound translation factors. Is thus essential for accurate translation. This Chloroflexus aggregans (strain MD-66 / DSM 9485) protein is Large ribosomal subunit protein bL12.